The chain runs to 29 residues: Kalata-B15 (29 aa).

The cyclopeptide (Gly-Asp) cross-link spans 1–29 (GLPVCGESCFGGSCYTPGCSCTWPICTRD). 3 cysteine pairs are disulfide-bonded: Cys5–Cys19, Cys9–Cys21, and Cys14–Cys26.

Post-translationally, this is a cyclic peptide.

Its function is as follows. Probably participates in a plant defense mechanism. In Oldenlandia affinis, this protein is Kalata-B15.